The primary structure comprises 399 residues: Beta sliding clamp (399 aa).

The protein belongs to the beta sliding clamp family. In terms of assembly, forms a ring-shaped head-to-tail homodimer around DNA which binds and tethers DNA polymerases and other proteins to the DNA. The DNA replisome complex has a single clamp-loading complex (3 tau and 1 each of delta, delta', psi and chi subunits) which binds 3 Pol III cores (1 core on the leading strand and 2 on the lagging strand) each with a beta sliding clamp dimer. Additional proteins in the replisome are other copies of gamma, psi and chi, Ssb, DNA helicase and RNA primase.

It localises to the cytoplasm. Functionally, confers DNA tethering and processivity to DNA polymerases and other proteins. Acts as a clamp, forming a ring around DNA (a reaction catalyzed by the clamp-loading complex) which diffuses in an ATP-independent manner freely and bidirectionally along dsDNA. Initially characterized for its ability to contact the catalytic subunit of DNA polymerase III (Pol III), a complex, multichain enzyme responsible for most of the replicative synthesis in bacteria; Pol III exhibits 3'-5' exonuclease proofreading activity. The beta chain is required for initiation of replication as well as for processivity of DNA replication. This Mycobacterium leprae (strain TN) protein is Beta sliding clamp (dnaN).